Consider the following 632-residue polypeptide: Bestrophin homolog 24 (632 aa).

4 helical membrane passes run 28-48 (IWKA…ILSV), 83-103 (GFFV…IGFI), 234-254 (IMYP…CLLA), and 271-291 (LYFP…MKVA). 2 disordered regions span residues 491–516 (LSNK…EHPF) and 562–632 (ETEV…TKFE). Positions 563-602 (TEVKRDEKKKKEEELREEGDNGKEEKDNKEDKKEEQDRPS) are enriched in basic and acidic residues. The span at 623–632 (PHLRPPTKFE) shows a compositional bias: basic residues.

It belongs to the anion channel-forming bestrophin (TC 1.A.46) family. Calcium-sensitive chloride channel subfamily. In terms of assembly, forms oligomers.

It is found in the cell membrane. Forms chloride channels. This chain is Bestrophin homolog 24 (best-24), found in Caenorhabditis elegans.